The following is a 245-amino-acid chain: 1-(5-phosphoribosyl)-5-[(5-phosphoribosylamino)methylideneamino] imidazole-4-carboxamide isomerase (245 aa).

Catalysis depends on Asp-10, which acts as the Proton acceptor. Catalysis depends on Asp-135, which acts as the Proton donor.

Belongs to the HisA/HisF family.

It is found in the cytoplasm. It catalyses the reaction 1-(5-phospho-beta-D-ribosyl)-5-[(5-phospho-beta-D-ribosylamino)methylideneamino]imidazole-4-carboxamide = 5-[(5-phospho-1-deoxy-D-ribulos-1-ylimino)methylamino]-1-(5-phospho-beta-D-ribosyl)imidazole-4-carboxamide. The protein operates within amino-acid biosynthesis; L-histidine biosynthesis; L-histidine from 5-phospho-alpha-D-ribose 1-diphosphate: step 4/9. The sequence is that of 1-(5-phosphoribosyl)-5-[(5-phosphoribosylamino)methylideneamino] imidazole-4-carboxamide isomerase from Methanosarcina barkeri (strain Fusaro / DSM 804).